Consider the following 180-residue polypeptide: Crossover junction endodeoxyribonuclease RuvC (180 aa).

Residues D9, E74, and D146 contribute to the active site. Mg(2+)-binding residues include D9, E74, and D146.

Belongs to the RuvC family. As to quaternary structure, homodimer which binds Holliday junction (HJ) DNA. The HJ becomes 2-fold symmetrical on binding to RuvC with unstacked arms; it has a different conformation from HJ DNA in complex with RuvA. In the full resolvosome a probable DNA-RuvA(4)-RuvB(12)-RuvC(2) complex forms which resolves the HJ. Mg(2+) serves as cofactor.

It is found in the cytoplasm. The enzyme catalyses Endonucleolytic cleavage at a junction such as a reciprocal single-stranded crossover between two homologous DNA duplexes (Holliday junction).. Its function is as follows. The RuvA-RuvB-RuvC complex processes Holliday junction (HJ) DNA during genetic recombination and DNA repair. Endonuclease that resolves HJ intermediates. Cleaves cruciform DNA by making single-stranded nicks across the HJ at symmetrical positions within the homologous arms, yielding a 5'-phosphate and a 3'-hydroxyl group; requires a central core of homology in the junction. The consensus cleavage sequence is 5'-(A/T)TT(C/G)-3'. Cleavage occurs on the 3'-side of the TT dinucleotide at the point of strand exchange. HJ branch migration catalyzed by RuvA-RuvB allows RuvC to scan DNA until it finds its consensus sequence, where it cleaves and resolves the cruciform DNA. This chain is Crossover junction endodeoxyribonuclease RuvC, found in Methylobacillus flagellatus (strain ATCC 51484 / DSM 6875 / VKM B-1610 / KT).